A 243-amino-acid chain; its full sequence is tRNA (guanine-N(1)-)-methyltransferase (243 aa).

Residues glycine 108 and 127-132 (LGDFVL) contribute to the S-adenosyl-L-methionine site.

The protein belongs to the RNA methyltransferase TrmD family. In terms of assembly, homodimer.

The protein resides in the cytoplasm. It catalyses the reaction guanosine(37) in tRNA + S-adenosyl-L-methionine = N(1)-methylguanosine(37) in tRNA + S-adenosyl-L-homocysteine + H(+). Functionally, specifically methylates guanosine-37 in various tRNAs. In Streptococcus equi subsp. equi (strain 4047), this protein is tRNA (guanine-N(1)-)-methyltransferase.